Consider the following 362-residue polypeptide: Protein RecA (362 aa).

Position 77 to 84 (77 to 84 (GPESSGKT)) interacts with ATP.

This sequence belongs to the RecA family.

Its subcellular location is the cytoplasm. Can catalyze the hydrolysis of ATP in the presence of single-stranded DNA, the ATP-dependent uptake of single-stranded DNA by duplex DNA, and the ATP-dependent hybridization of homologous single-stranded DNAs. It interacts with LexA causing its activation and leading to its autocatalytic cleavage. The polypeptide is Protein RecA (Rhizobium leguminosarum bv. trifolii (strain WSM2304)).